The sequence spans 171 residues: uncharacterized protein (171 aa).

Residues 30–97 form the HTH gntR-type domain; that stretch reads AGRVSAAYHA…PKKGIIICAL (68 aa). The H-T-H motif DNA-binding region spans 57–76; the sequence is EIEIARQLGMSRTPVHEAMA.

This is an uncharacterized protein from Agrobacterium vitis (Rhizobium vitis).